The primary structure comprises 850 residues: Penicillin-binding protein 1A (850 aa).

Residues 1-5 (MKFVK) are Cytoplasmic-facing. The helical; Signal-anchor for type II membrane protein transmembrane segment at 6 to 26 (YFLILAVCCILLGAGSIYGLY) threads the bilayer. At 27-850 (RYIEPQLPDV…IDNGEAQELF (824 aa)) the chain is on the periplasmic side. Residues 48–216 (MQIYSADGEL…STFNPLYSMD (169 aa)) form a transglycosylase region. E86 serves as the catalytic Proton donor; for transglycosylase activity. Residues 400–710 (DVLQTGQQIW…GWRAGRDLQR (311 aa)) are transpeptidase. The Acyl-ester intermediate; for transpeptidase activity role is filled by S465.

This sequence in the N-terminal section; belongs to the glycosyltransferase 51 family. In the C-terminal section; belongs to the transpeptidase family.

The protein resides in the cell inner membrane. It carries out the reaction [GlcNAc-(1-&gt;4)-Mur2Ac(oyl-L-Ala-gamma-D-Glu-L-Lys-D-Ala-D-Ala)](n)-di-trans,octa-cis-undecaprenyl diphosphate + beta-D-GlcNAc-(1-&gt;4)-Mur2Ac(oyl-L-Ala-gamma-D-Glu-L-Lys-D-Ala-D-Ala)-di-trans,octa-cis-undecaprenyl diphosphate = [GlcNAc-(1-&gt;4)-Mur2Ac(oyl-L-Ala-gamma-D-Glu-L-Lys-D-Ala-D-Ala)](n+1)-di-trans,octa-cis-undecaprenyl diphosphate + di-trans,octa-cis-undecaprenyl diphosphate + H(+). It catalyses the reaction Preferential cleavage: (Ac)2-L-Lys-D-Ala-|-D-Ala. Also transpeptidation of peptidyl-alanyl moieties that are N-acyl substituents of D-alanine.. The protein operates within cell wall biogenesis; peptidoglycan biosynthesis. In terms of biological role, cell wall formation. Synthesis of cross-linked peptidoglycan from the lipid intermediates. The enzyme has a penicillin-insensitive transglycosylase N-terminal domain (formation of linear glycan strands) and a penicillin-sensitive transpeptidase C-terminal domain (cross-linking of the peptide subunits). The sequence is that of Penicillin-binding protein 1A (mrcA) from Escherichia coli (strain K12).